Reading from the N-terminus, the 129-residue chain is Small ribosomal subunit protein uS8 (129 aa).

Belongs to the universal ribosomal protein uS8 family. In terms of assembly, part of the 30S ribosomal subunit. Contacts proteins S5 and S12.

Functionally, one of the primary rRNA binding proteins, it binds directly to 16S rRNA central domain where it helps coordinate assembly of the platform of the 30S subunit. This is Small ribosomal subunit protein uS8 from Bdellovibrio bacteriovorus (strain ATCC 15356 / DSM 50701 / NCIMB 9529 / HD100).